Here is a 511-residue protein sequence, read N- to C-terminus: MQTSTNTPGGRTFFGHPYPLSGLFLSEMWERFSFYGIRPLLILFMAATVFDGGMGLPREQASAIVGIFAGSMYLAALPGGLLADNWLGQQRAVWYGSILIALGHLSIALSAFFGNDLFFIGLVFIVLGTGLFKTCISVMVGTLYKPGDARRDGGFSLFYMGINMGSFIAPLLSGWLLRTHGWHWGFGIGGIGMLVALLIFRGFAIPAMKRYDAEVGLDSSWNKPTNQRQGVGRWVTAIMAVVVVIIALISQGVIPINPVMIASLLVYVIAASVTLYFIYLFAFAKMSRKDRARLLVCFILLVSAAFFWSAFEQKPTSFNLFANDYTDRMVMGFEIPTVWFQSINALFIILLAPVFSWAWPALAKKKIQPSSITKFVIGILCAAAGFAVMMYAAQHVLSSGGAGVSPLWLVMSILLLTLGELCLSPIGLATMTLLAPDRMRGQVMGLWFCASSLGNLAAGLIGGHVKADQLDMLPTLFARCSIALVICAAVLILLIVPIRRLMNNTQGQQTA.

Over 1–19 the chain is Cytoplasmic; the sequence is MQTSTNTPGGRTFFGHPYP. The chain crosses the membrane as a helical span at residues 20 to 45; the sequence is LSGLFLSEMWERFSFYGIRPLLILFM. The Periplasmic portion of the chain corresponds to 46-59; sequence AATVFDGGMGLPRE. The helical transmembrane segment at 60–84 threads the bilayer; the sequence is QASAIVGIFAGSMYLAALPGGLLAD. The Cytoplasmic segment spans residues 85-88; the sequence is NWLG. Residues 89–109 traverse the membrane as a helical segment; sequence QQRAVWYGSILIALGHLSIAL. The Periplasmic portion of the chain corresponds to 110–115; that stretch reads SAFFGN. Residues 116–138 traverse the membrane as a helical segment; it reads DLFFIGLVFIVLGTGLFKTCISV. The Cytoplasmic portion of the chain corresponds to 139–149; sequence MVGTLYKPGDA. A helical membrane pass occupies residues 150–175; it reads RRDGGFSLFYMGINMGSFIAPLLSGW. Topologically, residues 176-181 are periplasmic; the sequence is LLRTHG. A helical membrane pass occupies residues 182-208; it reads WHWGFGIGGIGMLVALLIFRGFAIPAM. Residues 209–232 lie on the Cytoplasmic side of the membrane; it reads KRYDAEVGLDSSWNKPTNQRQGVG. The chain crosses the membrane as a helical span at residues 233-253; the sequence is RWVTAIMAVVVVIIALISQGV. Residues 254–256 are Periplasmic-facing; the sequence is IPI. A helical transmembrane segment spans residues 257–279; that stretch reads NPVMIASLLVYVIAASVTLYFIY. The Cytoplasmic portion of the chain corresponds to 280–294; it reads LFAFAKMSRKDRARL. A helical membrane pass occupies residues 295-321; it reads LVCFILLVSAAFFWSAFEQKPTSFNLF. Over 322–335 the chain is Periplasmic; sequence ANDYTDRMVMGFEI. Residues 336–357 traverse the membrane as a helical segment; sequence PTVWFQSINALFIILLAPVFSW. Residues 358 to 369 are Cytoplasmic-facing; sequence AWPALAKKKIQP. A helical transmembrane segment spans residues 370–396; sequence SSITKFVIGILCAAAGFAVMMYAAQHV. Topologically, residues 397-405 are periplasmic; sequence LSSGGAGVS. The helical transmembrane segment at 406–426 threads the bilayer; sequence PLWLVMSILLLTLGELCLSPI. Residues 427–441 lie on the Cytoplasmic side of the membrane; it reads GLATMTLLAPDRMRG. A helical membrane pass occupies residues 442-462; it reads QVMGLWFCASSLGNLAAGLIG. At 463 to 471 the chain is on the periplasmic side; the sequence is GHVKADQLD. The chain crosses the membrane as a helical span at residues 472 to 496; that stretch reads MLPTLFARCSIALVICAAVLILLIV. Topologically, residues 497–511 are cytoplasmic; that stretch reads PIRRLMNNTQGQQTA.

Belongs to the major facilitator superfamily. Proton-dependent oligopeptide transporter (POT/PTR) (TC 2.A.17) family.

It is found in the cell inner membrane. With respect to regulation, transport is inhibited by the proton ionophore carbonyl cyanide m-chlorophenylhydrazone (CCCP). Functionally, mediates the proton-dependent uptake of dipeptides. Shows higher affinity for dipeptides with a negatively charged amino acid residue at the N-terminal position, such as Asp-Ala and Glu-Ala. Also displays specificity for Ala-Ala, Ala-Tyr and Tyr-Ala. The protein is Peptide transporter YePEPT of Yersinia enterocolitica subsp. palearctica serotype O:3 (strain YE-P4).